Here is a 294-residue protein sequence, read N- to C-terminus: Elongation factor Ts (294 aa).

The tract at residues Thr81–Val84 is involved in Mg(2+) ion dislocation from EF-Tu.

Belongs to the EF-Ts family.

The protein resides in the cytoplasm. Associates with the EF-Tu.GDP complex and induces the exchange of GDP to GTP. It remains bound to the aminoacyl-tRNA.EF-Tu.GTP complex up to the GTP hydrolysis stage on the ribosome. The sequence is that of Elongation factor Ts from Levilactobacillus brevis (strain ATCC 367 / BCRC 12310 / CIP 105137 / JCM 1170 / LMG 11437 / NCIMB 947 / NCTC 947) (Lactobacillus brevis).